Consider the following 244-residue polypeptide: Nodulation protein G (244 aa).

11–35 is an NAD(+) binding site; sequence VTGASGAIGGAIARVLHAQGAIVGL. Ser-139 serves as a coordination point for substrate. Tyr-152 acts as the Proton acceptor in catalysis.

The protein belongs to the short-chain dehydrogenases/reductases (SDR) family.

Its function is as follows. Proposed to modify Nod factor fatty acyl chain. The chain is Nodulation protein G (nodG) from Rhizobium meliloti (Ensifer meliloti).